A 239-amino-acid chain; its full sequence is tRNA (guanine-N(1)-)-methyltransferase (239 aa).

S-adenosyl-L-methionine-binding positions include G108 and 127–132 (LGDYVL).

The protein belongs to the RNA methyltransferase TrmD family. Homodimer.

It localises to the cytoplasm. The catalysed reaction is guanosine(37) in tRNA + S-adenosyl-L-methionine = N(1)-methylguanosine(37) in tRNA + S-adenosyl-L-homocysteine + H(+). Functionally, specifically methylates guanosine-37 in various tRNAs. This is tRNA (guanine-N(1)-)-methyltransferase from Streptococcus pneumoniae (strain P1031).